We begin with the raw amino-acid sequence, 103 residues long: Large ribosomal subunit protein bL21 (103 aa).

Belongs to the bacterial ribosomal protein bL21 family. As to quaternary structure, part of the 50S ribosomal subunit. Contacts protein L20.

In terms of biological role, this protein binds to 23S rRNA in the presence of protein L20. This Thioalkalivibrio sulfidiphilus (strain HL-EbGR7) protein is Large ribosomal subunit protein bL21.